Consider the following 228-residue polypeptide: Max-interacting protein 1 (228 aa).

2 disordered regions span residues Tyr30–Glu76 and Ser160–Ser228. Basic residues predominate over residues Gln43–Lys56. Residues His57–Ser70 are compositionally biased toward polar residues. Residues Ala67–Leu119 form the bHLH domain. Acidic residues predominate over residues Glu173 to Ser183. A compositionally biased stretch (polar residues) spans Ser207 to Ser228.

As to quaternary structure, efficient DNA binding requires dimerization with another bHLH protein. Binds DNA as a heterodimer with MAX. Interacts with SMC3. Interacts with RNF17.

It localises to the nucleus. In terms of biological role, transcriptional repressor. MXI1 binds with MAX to form a sequence-specific DNA-binding protein complex which recognizes the core sequence 5'-CAC[GA]TG-3'. MXI1 thus antagonizes MYC transcriptional activity by competing for MAX. Isoform Short, which lacks a segment, has a much stronger suppressive potential and associates with a SIN3 homologous protein. The chain is Max-interacting protein 1 (Mxi1) from Mus musculus (Mouse).